The following is a 99-amino-acid chain: Small ribosomal subunit protein uS14m (99 aa).

This sequence belongs to the universal ribosomal protein uS14 family.

Its subcellular location is the mitochondrion. The sequence is that of Small ribosomal subunit protein uS14m (RPS14) from Acanthamoeba castellanii (Amoeba).